The chain runs to 96 residues: UPF0298 protein LCA_1075 (96 aa).

Belongs to the UPF0298 family.

The protein localises to the cytoplasm. The chain is UPF0298 protein LCA_1075 from Latilactobacillus sakei subsp. sakei (strain 23K) (Lactobacillus sakei subsp. sakei).